We begin with the raw amino-acid sequence, 250 residues long: Small ribosomal subunit protein uS3z (250 aa).

The KH type-2 domain maps to 21-92; the sequence is LNEVLTRELA…SVELYAEKVN (72 aa).

The protein belongs to the universal ribosomal protein uS3 family. Interacts with SNRNP35.

The sequence is that of Small ribosomal subunit protein uS3z (RPS3A) from Arabidopsis thaliana (Mouse-ear cress).